We begin with the raw amino-acid sequence, 261 residues long: Ribosomal RNA small subunit methyltransferase J (261 aa).

Residues 109–110, 125–126, and Asp-179 each bind S-adenosyl-L-methionine; these read RD and ER.

It belongs to the methyltransferase superfamily. RsmJ family.

It localises to the cytoplasm. The catalysed reaction is guanosine(1516) in 16S rRNA + S-adenosyl-L-methionine = N(2)-methylguanosine(1516) in 16S rRNA + S-adenosyl-L-homocysteine + H(+). Functionally, specifically methylates the guanosine in position 1516 of 16S rRNA. In Pseudomonas aeruginosa (strain UCBPP-PA14), this protein is Ribosomal RNA small subunit methyltransferase J.